A 390-amino-acid polypeptide reads, in one-letter code: Outer membrane protein assembly factor BamB (390 aa).

An N-terminal signal peptide occupies residues 1–25; it reads MPVLRDRIPRRGFFLGLALLAALSG. The N-palmitoyl cysteine moiety is linked to residue C26. C26 is lipidated: S-diacylglycerol cysteine.

The protein belongs to the BamB family. In terms of assembly, part of the Bam complex.

The protein localises to the cell outer membrane. In terms of biological role, part of the outer membrane protein assembly complex, which is involved in assembly and insertion of beta-barrel proteins into the outer membrane. This chain is Outer membrane protein assembly factor BamB, found in Marinobacter adhaerens (strain DSM 23420 / HP15).